The chain runs to 1500 residues: Host cell factor (1500 aa).

Kelch repeat units lie at residues 85–133 (LMVV…VEGT), 135–181 (MFVF…RLGH), 189–237 (KIFL…TYGD), 259–307 (NLLI…MIGN), and 308–373 (KMYV…GIQS). At serine 477 the chain carries Phosphoserine. Over residues 517-528 (LLQSMSQPSSPA) the composition is skewed to polar residues. Residues 517 to 543 (LLQSMSQPSSPASRADKDPLSSGGGTT) form a disordered region. Serine 958 and serine 966 each carry phosphoserine. Residues 1024 to 1061 (SEGQHGSEENENNGENATSSSASALFTGGDTAGPSRAQ) form a disordered region. The segment covering 1036 to 1047 (NGENATSSSASA) has biased composition (low complexity). Threonine 1126 carries the post-translational modification Phosphothreonine. The disordered stretch occupies residues 1161-1185 (IGSLKENQDENKKFKQRQESSPSQN). Basic and acidic residues predominate over residues 1166 to 1178 (ENQDENKKFKQRQ). Fibronectin type-III domains are found at residues 1244 to 1341 (VQST…TCLP) and 1346 to 1457 (APSA…DPAA). Positions 1458–1500 (AKQHTPTVTPNLKRGPEKSTIGSSNIANTFCSPHKRGRNGLHD) are disordered. The Bipartite nuclear localization signal signature appears at 1470–1495 (KRGPEKSTIGSSNIANTFCSPHKRGR). Polar residues predominate over residues 1477–1488 (TIGSSNIANTFC). Serine 1489 carries the post-translational modification Phosphoserine. Basic residues predominate over residues 1490–1500 (PHKRGRNGLHD).

As to quaternary structure, core component of several methyltransferase-containing complexes. Component of the SET1 complex, composed at least of the catalytic subunit Set1, wds/WDR5, Wdr82, Rbbp5, ash2, Cfp1/CXXC1, hcf and Dpy-30L1. Component of the MLL3/4 complex composed at least of the catalytic subunit trr, ash2, Rbbp5, Dpy-30L1, wds, hcf, ptip, Pa1, Utx, Lpt and Ncoa6. Component of the Ada2a-containing (ATAC) complex composed of at least Ada2a, Atac1, Hcf, Ada3, Gcn5, Mocs2B, Charac-14, Atac3, Atac2, NC2beta and wds. Proteolytic cleavage occurs between amino acids 900 and 1100 within the non-conserved central region, giving rise to two independent but tightly associated N- and C-terminal subunits.

It is found in the nucleus. In terms of biological role, may be involved in control of the cell cycle. This Drosophila melanogaster (Fruit fly) protein is Host cell factor.